We begin with the raw amino-acid sequence, 178 residues long: MFQATTIIAVRKGQQTAIAGDGQVTLGQNTIMKQNATKIRRLYEGKVIAGFAGAVADAFTLFAKFEEKLKQAGGNLSKAAVEIAREWRSDRILRRLEALLIVADAEKIFIVSGSGELIEPDDGIAAIGSGGAYALAAARALNAFSELNAREIAVESLKIASGICVYTNEQISVEVIEK.

Threonine 5 is a catalytic residue. Serine 161, cysteine 164, and threonine 167 together coordinate Na(+).

This sequence belongs to the peptidase T1B family. HslV subfamily. As to quaternary structure, a double ring-shaped homohexamer of HslV is capped on each side by a ring-shaped HslU homohexamer. The assembly of the HslU/HslV complex is dependent on binding of ATP.

The protein localises to the cytoplasm. The enzyme catalyses ATP-dependent cleavage of peptide bonds with broad specificity.. With respect to regulation, allosterically activated by HslU binding. In terms of biological role, protease subunit of a proteasome-like degradation complex believed to be a general protein degrading machinery. This chain is ATP-dependent protease subunit HslV, found in Syntrophomonas wolfei subsp. wolfei (strain DSM 2245B / Goettingen).